We begin with the raw amino-acid sequence, 176 residues long: ATP-dependent protease subunit HslV (176 aa).

Thr-2 is an active-site residue. The Na(+) site is built by Gly-157, Cys-160, and Thr-163.

The protein belongs to the peptidase T1B family. HslV subfamily. In terms of assembly, a double ring-shaped homohexamer of HslV is capped on each side by a ring-shaped HslU homohexamer. The assembly of the HslU/HslV complex is dependent on binding of ATP.

It localises to the cytoplasm. It catalyses the reaction ATP-dependent cleavage of peptide bonds with broad specificity.. Allosterically activated by HslU binding. Protease subunit of a proteasome-like degradation complex believed to be a general protein degrading machinery. The polypeptide is ATP-dependent protease subunit HslV (Proteus mirabilis (strain HI4320)).